The following is a 185-amino-acid chain: Ribosome-recycling factor (185 aa).

It belongs to the RRF family.

The protein resides in the cytoplasm. Responsible for the release of ribosomes from messenger RNA at the termination of protein biosynthesis. May increase the efficiency of translation by recycling ribosomes from one round of translation to another. This is Ribosome-recycling factor from Streptococcus equi subsp. equi (strain 4047).